We begin with the raw amino-acid sequence, 660 residues long: Histone deacetylase 5 (660 aa).

Ala2 is modified (N-acetylalanine). Positions 26 to 349 (KVGLIYDETM…SLACVQVLLE (324 aa)) are histone deacetylase. His158 serves as the catalytic Proton donor/acceptor. Zn(2+)-binding residues include Asp198, His200, and Asp291.

Belongs to the histone deacetylase family. HD type 2 subfamily. As to quaternary structure, interacts with HDA6. Zn(2+) is required as a cofactor. In terms of tissue distribution, expressed in stems, leaves, flowers, siliques and mature seeds.

It localises to the nucleus. The protein resides in the cytoplasm. The catalysed reaction is N(6)-acetyl-L-lysyl-[histone] + H2O = L-lysyl-[histone] + acetate. Its activity is regulated as follows. Inhibited by trichostatin A (TSA), a well-known histone deacetylase inhibitor. Responsible for the deacetylation of lysine residues on the N-terminal part of the core histones (H2A, H2B, H3 and H4). Histone deacetylation gives a tag for epigenetic repression and plays an important role in transcriptional regulation, cell cycle progression and developmental events. Histone deacetylases act via the formation of large multiprotein complexes. Involved in the regulation of flowering time by repressing FLC and AGL27/MAF1 expression. Forms a histone deacetylase complex with HDA6, FLD and MSI4/FVE that represses FLC gene expression to control flowering time. Unlike its tandem duplication HDA18, HDA5 does not seem to be required for the cellular patterning in the root epidermis. The sequence is that of Histone deacetylase 5 from Arabidopsis thaliana (Mouse-ear cress).